Here is an 834-residue protein sequence, read N- to C-terminus: Dual specificity calcium/calmodulin-dependent 3',5'-cyclic nucleotide phosphodiesterase 1 (834 aa).

Residues 152–338 (HSHGRDDQQQ…DELSEVQPDA (187 aa)) form a disordered region. Residues 207–222 (THSGPTGPPSNTSSET) show a composition bias toward low complexity. A compositionally biased stretch (basic and acidic residues) spans 236-252 (TVRESVMEESPSKDPGD). The span at 260-301 (STSTLTSQTTTSSSATAEPSAKAAESQAGSAGSSGSCSNPAA) shows a compositional bias: low complexity. The segment covering 313–322 (WARSMSTNKT) has biased composition (polar residues). A calmodulin-binding region spans residues 364–387 (EKPKFRSVAHAIRAGIFVDRMYRR). Residues 392–786 (ALTAFPPDVV…RIWKEQAVKD (395 aa)) form the PDEase domain. His-469 functions as the Proton donor in the catalytic mechanism. Zn(2+) is bound by residues His-473, His-509, Asp-510, and Asp-617. Asp-510 is a binding site for Mg(2+). 2 disordered regions span residues 720 to 744 (IVIPNSGITPSMDKPRDHRTEAKTT) and 797 to 834 (EEAAAAAAAEAEESKPETETADGEQSEPAAEPADGAAA). Residues 732–741 (DKPRDHRTEA) are compositionally biased toward basic and acidic residues. Residues 823 to 834 (EPAAEPADGAAA) show a composition bias toward low complexity.

This sequence belongs to the cyclic nucleotide phosphodiesterase family. PDE1 subfamily. It depends on Zn(2+) as a cofactor. Mg(2+) is required as a cofactor. Expressed in the head (at protein level). Expressed in Malpighian tubules. Expressed in neurons in the brain and ventral ganglia with male flies having higher levels of expression in the abdominal ganglia compared to female flies.

The catalysed reaction is a nucleoside 3',5'-cyclic phosphate + H2O = a nucleoside 5'-phosphate + H(+). It carries out the reaction 3',5'-cyclic GMP + H2O = GMP + H(+). The enzyme catalyses 3',5'-cyclic AMP + H2O = AMP + H(+). Type I PDE are activated by the binding of calmodulin in the presence of Ca(2+). Inhibited by zaprinast and sildenafil. Functionally, cyclic nucleotide phosphodiesterase with a dual specificity for the second messengers cAMP and cGMP, which are key regulators of many important physiological processes. Required for male fertility and male mating behavior. The protein is Dual specificity calcium/calmodulin-dependent 3',5'-cyclic nucleotide phosphodiesterase 1 of Drosophila melanogaster (Fruit fly).